Reading from the N-terminus, the 364-residue chain is MLMPRQNCEVFRQLFVNDTPLMDMRAPIEFAQGAFPTSINHPLMEDEERKAVGTCYKAHGQDAAIALGHQLVNGDIKAARLAQWKAFAEENPNGYLYCFRGGLRSRITQQWLKEAGIDYPMVVGGYKALRRFLIETIDTVAQQPMTIVGGNTGSGKTIMVNELANGIDLEGAANHRGSSFGRYVTAQRTQIDFENVLAVEMLKKQAQGCTHFVFEDEGRAIGSASVPLSINAAMGNADVAIVDDPLDVRIDRLIDDYVVRMQRDYIAQNGEQQGWELFTEYLERGMFGIRKRLGMKRYEELLAAQKQAIATQKSNGTLAEHDNWLRPLLIEYYDPMYTYQLSKKADRIVFRGNYQEVKSWLADK.

Residues 15 to 138 form the Rhodanese domain; the sequence is FVNDTPLMDM…LRRFLIETID (124 aa). C98 (S-selanylcysteine intermediate) is an active-site residue.

Belongs to the SelU family. In terms of assembly, monomer.

The enzyme catalyses 5-methylaminomethyl-2-thiouridine(34) in tRNA + selenophosphate + (2E)-geranyl diphosphate + H2O + H(+) = 5-methylaminomethyl-2-selenouridine(34) in tRNA + (2E)-thiogeraniol + phosphate + diphosphate. The catalysed reaction is 5-methylaminomethyl-2-thiouridine(34) in tRNA + (2E)-geranyl diphosphate = 5-methylaminomethyl-S-(2E)-geranyl-thiouridine(34) in tRNA + diphosphate. It carries out the reaction 5-methylaminomethyl-S-(2E)-geranyl-thiouridine(34) in tRNA + selenophosphate + H(+) = 5-methylaminomethyl-2-(Se-phospho)selenouridine(34) in tRNA + (2E)-thiogeraniol. It catalyses the reaction 5-methylaminomethyl-2-(Se-phospho)selenouridine(34) in tRNA + H2O = 5-methylaminomethyl-2-selenouridine(34) in tRNA + phosphate. In terms of biological role, involved in the post-transcriptional modification of the uridine at the wobble position (U34) of tRNA(Lys), tRNA(Glu) and tRNA(Gln). Catalyzes the conversion of 2-thiouridine (S2U-RNA) to 2-selenouridine (Se2U-RNA). Acts in a two-step process involving geranylation of 2-thiouridine (S2U) to S-geranyl-2-thiouridine (geS2U) and subsequent selenation of the latter derivative to 2-selenouridine (Se2U) in the tRNA chain. The polypeptide is tRNA 2-selenouridine synthase (Photobacterium profundum (strain SS9)).